Reading from the N-terminus, the 107-residue chain is Phosphoribosyl-ATP pyrophosphatase (107 aa).

This sequence belongs to the PRA-PH family.

The protein localises to the cytoplasm. The catalysed reaction is 1-(5-phospho-beta-D-ribosyl)-ATP + H2O = 1-(5-phospho-beta-D-ribosyl)-5'-AMP + diphosphate + H(+). It participates in amino-acid biosynthesis; L-histidine biosynthesis; L-histidine from 5-phospho-alpha-D-ribose 1-diphosphate: step 2/9. The chain is Phosphoribosyl-ATP pyrophosphatase from Bacillus cereus (strain ATCC 14579 / DSM 31 / CCUG 7414 / JCM 2152 / NBRC 15305 / NCIMB 9373 / NCTC 2599 / NRRL B-3711).